A 284-amino-acid chain; its full sequence is MQNQVIQLGNIEIGNNKPFVLFGGMNVLESRDMAMQVCEKYVEVTQKLGVPYIFKASFDKANRSSIHSYRGPGMEEGLKIFQELKETFGVKVITDVHEIYQCRPVAEVVDIIQLPAFLARQTDLVEAMARTGAVINVKKPQFLSPGQIGNIVEKIAECGNNKVILCDRGTNFGYDNLVVDMLGFNIMKKVSQGCPVIFDVTHSLQCRDPFGAASGGRRDQVTELARSGMAIGLAGLFLESHPNPNQAKCDGPSALPLSKLEPFVAQMKAIDDLVKSFEEIDTSN.

It belongs to the KdsA family.

It is found in the cytoplasm. It carries out the reaction D-arabinose 5-phosphate + phosphoenolpyruvate + H2O = 3-deoxy-alpha-D-manno-2-octulosonate-8-phosphate + phosphate. The protein operates within carbohydrate biosynthesis; 3-deoxy-D-manno-octulosonate biosynthesis; 3-deoxy-D-manno-octulosonate from D-ribulose 5-phosphate: step 2/3. Its pathway is bacterial outer membrane biogenesis; lipopolysaccharide biosynthesis. The sequence is that of 2-dehydro-3-deoxyphosphooctonate aldolase from Histophilus somni (strain 2336) (Haemophilus somnus).